We begin with the raw amino-acid sequence, 325 residues long: All-trans-nonaprenyl-diphosphate synthase (geranyl-diphosphate specific) (325 aa).

3 residues coordinate isopentenyl diphosphate: Lys48, Arg51, and His81. Mg(2+)-binding residues include Asp88 and Asp92. Arg97 is a binding site for an all-trans-polyprenyl diphosphate. Position 98 (Arg98) interacts with isopentenyl diphosphate. Residues Lys174, Thr175, Gln211, and Lys228 each coordinate an all-trans-polyprenyl diphosphate.

The protein belongs to the FPP/GGPP synthase family. In terms of assembly, homodimer. Requires Mg(2+) as cofactor.

It catalyses the reaction 7 isopentenyl diphosphate + (2E)-geranyl diphosphate = all-trans-nonaprenyl diphosphate + 7 diphosphate. Functionally, catalyzes the sequential condensation of isopentenyl diphosphate (IPP) with the allylic substrate to give solanesyl diphosphate. Could be important to determine the side chain length of ubiquinone. In Rhodobacter capsulatus (Rhodopseudomonas capsulata), this protein is All-trans-nonaprenyl-diphosphate synthase (geranyl-diphosphate specific) (sdsA).